Consider the following 350-residue polypeptide: UDP-glucose 4-epimerase (350 aa).

Residues 13 to 15 (GYI), 34 to 38 (DNLCN), 67 to 68 (DI), Phe-89, and Lys-93 each bind NAD(+). 133-135 (SAT) serves as a coordination point for substrate. Residue Tyr-158 is the Proton acceptor of the active site. Residues Lys-162 and Tyr-186 each contribute to the NAD(+) site. Residues 186 to 188 (YFN), 207 to 209 (NNL), 225 to 227 (SVY), Arg-240, and 303 to 306 (RSGD) contribute to the substrate site.

Belongs to the NAD(P)-dependent epimerase/dehydratase family. As to quaternary structure, homodimer. NAD(+) is required as a cofactor.

The catalysed reaction is UDP-alpha-D-glucose = UDP-alpha-D-galactose. The enzyme catalyses UDP-N-acetyl-alpha-D-glucosamine = UDP-N-acetyl-alpha-D-galactosamine. It functions in the pathway carbohydrate metabolism; galactose metabolism. Functionally, catalyzes two distinct but analogous reactions: the reversible epimerization of UDP-glucose to UDP-galactose and the reversible epimerization of UDP-N-acetylglucosamine to UDP-N-acetylgalactosamine. The reaction with UDP-Gal plays a critical role in the Leloir pathway of galactose catabolism in which galactose is converted to the glycolytic intermediate glucose 6-phosphate. It contributes to the catabolism of dietary galactose and enables the endogenous biosynthesis of both UDP-Gal and UDP-GalNAc when exogenous sources are limited. Both UDP-sugar interconversions are important in the synthesis of glycoproteins and glycolipids. This chain is UDP-glucose 4-epimerase (Gale), found in Drosophila melanogaster (Fruit fly).